We begin with the raw amino-acid sequence, 829 residues long: Cadherin-16 (829 aa).

The N-terminal stretch at 1-18 (MVPAWLWLLCFSVPQALV) is a signal peptide. Residues 19 to 786 (EVSPTTLHVE…MKGMPTKLSA (768 aa)) lie on the Extracellular side of the membrane. 6 consecutive Cadherin domains span residues 25 to 126 (LHVE…VPQF), 131 to 235 (YSAR…SIVE), 242 to 336 (EPVH…APVC), 341 to 449 (PPVS…APEF), 455 to 564 (GPVS…PPRL), and 569 to 665 (YEAD…APAL). 3 N-linked (GlcNAc...) asparagine glycosylation sites follow: N517, N602, and N722. The segment at 666 to 786 (PLAPMPSRHL…MKGMPTKLSA (121 aa)) is ectodomain G. Residues 787–807 (VGILVGTLAAIGFFLILIFTH) form a helical membrane-spanning segment. Over 808 to 829 (LALARKKDLDAPADNVPLKAAA) the chain is Cytoplasmic.

In terms of tissue distribution, kidney specific. Limited to the basolateral membranes of renal tubular epithelial cells.

It localises to the cell membrane. In terms of biological role, cadherins are calcium-dependent cell adhesion proteins. They preferentially interact with themselves in a homophilic manner in connecting cells; cadherins may thus contribute to the sorting of heterogeneous cell types. In Oryctolagus cuniculus (Rabbit), this protein is Cadherin-16 (CDH16).